Consider the following 322-residue polypeptide: Cytochrome c biogenesis protein CcsA (322 aa).

Transmembrane regions (helical) follow at residues 17 to 37 (VVSI…IVGL), 44 to 64 (GMIA…IYLG), 71 to 91 (LYES…VPYF), 98 to 118 (LSAL…SGLL), 143 to 163 (MVLG…LLVI), 225 to 245 (VISL…VWAN), 258 to 273 (ETWA…IYLH), and 286 to 306 (AIVA…VNLL).

This sequence belongs to the CcmF/CycK/Ccl1/NrfE/CcsA family. May interact with Ccs1.

It is found in the plastid. It localises to the chloroplast thylakoid membrane. In terms of biological role, required during biogenesis of c-type cytochromes (cytochrome c6 and cytochrome f) at the step of heme attachment. The protein is Cytochrome c biogenesis protein CcsA of Vitis vinifera (Grape).